The sequence spans 180 residues: uncharacterized protein (180 aa).

The next 2 helical transmembrane spans lie at 37 to 59 (VLHAAAAVTEYAFVLSTLVFPSF) and 128 to 147 (AGSATLFAGAAGAALRVLFV).

Its subcellular location is the cell membrane. This is an uncharacterized protein from Treponema pallidum (strain Nichols).